The sequence spans 522 residues: Peptide chain release factor 3 (522 aa).

A tr-type G domain is found at 9–276; sequence KKRRTFAIIS…SFVNLAPAPQ (268 aa). Residues 18–25, 86–90, and 140–143 each bind GTP; these read SHPDAGKT, DTPGH, and NKLD.

It belongs to the TRAFAC class translation factor GTPase superfamily. Classic translation factor GTPase family. PrfC subfamily.

The protein localises to the cytoplasm. Increases the formation of ribosomal termination complexes and stimulates activities of RF-1 and RF-2. It binds guanine nucleotides and has strong preference for UGA stop codons. It may interact directly with the ribosome. The stimulation of RF-1 and RF-2 is significantly reduced by GTP and GDP, but not by GMP. The chain is Peptide chain release factor 3 from Lactobacillus johnsonii (strain CNCM I-12250 / La1 / NCC 533).